The chain runs to 75 residues: UPF0291 protein lin1342 (75 aa).

The disordered stretch occupies residues 55 to 75; the sequence is IDPKGNDVTPHKIKQMRKNKK. The span at 65–75 shows a compositional bias: basic residues; that stretch reads HKIKQMRKNKK.

This sequence belongs to the UPF0291 family.

Its subcellular location is the cytoplasm. This is UPF0291 protein lin1342 from Listeria innocua serovar 6a (strain ATCC BAA-680 / CLIP 11262).